Here is a 252-residue protein sequence, read N- to C-terminus: Indole-3-glycerol phosphate synthase (252 aa).

It belongs to the TrpC family.

It catalyses the reaction 1-(2-carboxyphenylamino)-1-deoxy-D-ribulose 5-phosphate + H(+) = (1S,2R)-1-C-(indol-3-yl)glycerol 3-phosphate + CO2 + H2O. Its pathway is amino-acid biosynthesis; L-tryptophan biosynthesis; L-tryptophan from chorismate: step 4/5. This chain is Indole-3-glycerol phosphate synthase, found in Listeria monocytogenes serovar 1/2a (strain ATCC BAA-679 / EGD-e).